A 455-amino-acid chain; its full sequence is Dihydrolipoyllysine-residue succinyltransferase component of 2-oxoglutarate dehydrogenase complex, mitochondrial (455 aa).

The transit peptide at 1-68 (MLSRSRCASR…RFFRTTAVCK (68 aa)) directs the protein to the mitochondrion. In terms of domain architecture, Lipoyl-binding spans 71-145 (VITVKTPAFA…EGGTPLFTLR (75 aa)). A Phosphoserine modification is found at serine 82. Residue lysine 111 is modified to N6-lipoyllysine. N6-acetyllysine is present on lysine 155. Low complexity predominate over residues 155–173 (KPAAAPAAAAPKAEPTVSA). Residues 155 to 220 (KPAAAPAAAA…PRAEAGAGVG (66 aa)) are disordered. The segment covering 174-193 (VPPPPAAPIPTQMPPVPSPS) has biased composition (pro residues). An N6-acetyllysine mark is found at lysine 269, lysine 274, lysine 275, lysine 279, and lysine 309. Catalysis depends on residues histidine 426 and aspartate 430.

It belongs to the 2-oxoacid dehydrogenase family. In terms of assembly, the 2-oxoglutarate dehydrogenase complex is composed of OGDH (2-oxoglutarate dehydrogenase; E1), DLST (dihydrolipoamide succinyltransferase; E2), DLD (dihydrolipoamide dehydrogenase; E3) and the assembly factor KGD4. It contains multiple copies of the three enzymatic components (E1, E2 and E3). In the nucleus, the 2-oxoglutarate dehydrogenase complex associates with KAT2A. Interacts with ABHD11; this interaction maintains the functional lipoylation of the 2-oxoglutarate dehydrogenase complex. Requires (R)-lipoate as cofactor.

It is found in the mitochondrion matrix. Its subcellular location is the nucleus. It catalyses the reaction N(6)-[(R)-dihydrolipoyl]-L-lysyl-[protein] + succinyl-CoA = N(6)-[(R)-S(8)-succinyldihydrolipoyl]-L-lysyl-[protein] + CoA. Its pathway is amino-acid degradation; L-lysine degradation via saccharopine pathway; glutaryl-CoA from L-lysine: step 6/6. It participates in carbohydrate metabolism; tricarboxylic acid cycle. Its function is as follows. Dihydrolipoamide succinyltransferase (E2) component of the 2-oxoglutarate dehydrogenase complex. The 2-oxoglutarate dehydrogenase complex catalyzes the overall conversion of 2-oxoglutarate to succinyl-CoA and CO(2). The 2-oxoglutarate dehydrogenase complex is mainly active in the mitochondrion. A fraction of the 2-oxoglutarate dehydrogenase complex also localizes in the nucleus and is required for lysine succinylation of histones: associates with KAT2A on chromatin and provides succinyl-CoA to histone succinyltransferase KAT2A. This is Dihydrolipoyllysine-residue succinyltransferase component of 2-oxoglutarate dehydrogenase complex, mitochondrial from Bos taurus (Bovine).